The chain runs to 841 residues: Potassium transport protein 1 (841 aa).

A run of 2 helical transmembrane segments spans residues 24-44 (YIYIISLTIIASILLFTGGTT) and 80-100 (ILYGFTAITVPIWMHGSISFI). N-linked (GlcNAc...) asparagine glycosylation is found at Asn116 and Asn164. Residues 173–192 (STNNPYFPDNPPSPKADISK) are disordered. 2 N-linked (GlcNAc...) asparagine glycosylation sites follow: Asn215 and Asn401. Transmembrane regions (helical) follow at residues 469 to 489 (MVTLYFIIFNIAAFVTFIVFA), 507 to 527 (GWWALFSSASSFNDLGFSLIP), 537 to 557 (IFLLLISSLFIIAGNTGFPCF), 600 to 620 (WVLFFVLLLLNVIDLVLFMVL), 662 to 682 (AVLVSYMVMMYISVYPVAINM), 715 to 735 (LSYDLWYIFLGLFIICICEGG), and 747 to 767 (IFTVLFEVVSAYGTVGLSTGL). An N-linked (GlcNAc...) asparagine glycan is attached at Asn771.

Belongs to the TrkH potassium transport family.

The protein resides in the cell membrane. Together with TRK2, defines the major, high-affinity potassium influx transport system. Involved in maintenance of the proper sodium/potassium ratio in the cell and in regulating the plasma membrane potential. The sequence is that of Potassium transport protein 1 (trk1) from Schizosaccharomyces pombe (strain 972 / ATCC 24843) (Fission yeast).